Consider the following 37-residue polypeptide: Large ribosomal subunit protein bL36 (37 aa).

The protein belongs to the bacterial ribosomal protein bL36 family.

This Mycobacterium leprae (strain Br4923) protein is Large ribosomal subunit protein bL36.